The sequence spans 286 residues: Ribosomal RNA small subunit methyltransferase A (286 aa).

6 residues coordinate S-adenosyl-L-methionine: N31, I33, G58, E80, D106, and N125.

Belongs to the class I-like SAM-binding methyltransferase superfamily. rRNA adenine N(6)-methyltransferase family. RsmA subfamily.

The protein localises to the cytoplasm. It carries out the reaction adenosine(1518)/adenosine(1519) in 16S rRNA + 4 S-adenosyl-L-methionine = N(6)-dimethyladenosine(1518)/N(6)-dimethyladenosine(1519) in 16S rRNA + 4 S-adenosyl-L-homocysteine + 4 H(+). Functionally, specifically dimethylates two adjacent adenosines (A1518 and A1519) in the loop of a conserved hairpin near the 3'-end of 16S rRNA in the 30S particle. May play a critical role in biogenesis of 30S subunits. The chain is Ribosomal RNA small subunit methyltransferase A from Wolbachia pipientis wMel.